The sequence spans 423 residues: 3-phosphoshikimate 1-carboxyvinyltransferase (423 aa).

Positions 28, 29, and 33 each coordinate 3-phosphoshikimate. Phosphoenolpyruvate is bound at residue lysine 28. Phosphoenolpyruvate is bound by residues glycine 96 and arginine 124. Residues serine 169, serine 170, glutamine 171, serine 198, glutamate 312, and histidine 339 each coordinate 3-phosphoshikimate. Phosphoenolpyruvate is bound at residue glutamine 171. Residue glutamate 312 is the Proton acceptor of the active site. The phosphoenolpyruvate site is built by arginine 343, arginine 384, and lysine 409.

This sequence belongs to the EPSP synthase family. In terms of assembly, monomer.

The protein resides in the cytoplasm. It catalyses the reaction 3-phosphoshikimate + phosphoenolpyruvate = 5-O-(1-carboxyvinyl)-3-phosphoshikimate + phosphate. It functions in the pathway metabolic intermediate biosynthesis; chorismate biosynthesis; chorismate from D-erythrose 4-phosphate and phosphoenolpyruvate: step 6/7. In terms of biological role, catalyzes the transfer of the enolpyruvyl moiety of phosphoenolpyruvate (PEP) to the 5-hydroxyl of shikimate-3-phosphate (S3P) to produce enolpyruvyl shikimate-3-phosphate and inorganic phosphate. This is 3-phosphoshikimate 1-carboxyvinyltransferase from Acidothermus cellulolyticus (strain ATCC 43068 / DSM 8971 / 11B).